A 142-amino-acid chain; its full sequence is Baculoviral IAP repeat-containing protein 5 (142 aa).

One copy of the BIR repeat lies at 18–88; the sequence is RIYTFKNWPF…KHSPGCAFLT (71 aa). The residue at position 23 (Lys-23) is an N6-acetyllysine. Thr-34 bears the Phosphothreonine; by CDK1 and CDK15 mark. Thr-48 carries the phosphothreonine modification. Positions 57, 60, 77, and 84 each coordinate Zn(2+). Residues Lys-90, Lys-110, Lys-112, and Lys-115 each carry the N6-acetyllysine modification. Phosphothreonine; by AURKB is present on Thr-117.

It belongs to the IAP family. Monomer or homodimer. Exists as a homodimer in the apo state and as a monomer in the CPC-bound state. The monomer protects cells against apoptosis more efficiently than the dimer. Only the dimeric form is capable of enhancing tubulin stability in cells. When phosphorylated, interacts with LAMTOR5/HBXIP; the resulting complex binds pro-CASP9, as well as active CASP9, but much less efficiently. Component of the chromosomal passenger complex (CPC) composed of at least BIRC5/survivin, CDCA8/borealin, INCENP, AURKB or AURKC; in the complex forms a triple-helix bundle-based subcomplex with INCENP and CDCA8. Interacts with JTB. Interacts (via BIR domain) with histone H3 phosphorylated at 'Thr-3' (H3pT3). Interacts with EVI5. Interacts with GTP-bound RAN in both the S and M phases of the cell cycle. Interacts with USP9X. Interacts with tubulin. Interacts with BIRC2/c-IAP1. The monomeric form interacts with XIAP/BIRC4. Both the dimeric and monomeric form can interact with DIABLO/SMAC. Interacts with BIRC6/bruce. Interacts with FBXL7; this interaction facilitates the polyubiquitination and subsequent proteasomal degradation of BIRC5 by the SCF(FBXL7) E3 ubiquitin-protein ligase complex. Ubiquitinated by the Cul9-RING ubiquitin-protein ligase complex, leading to its degradation. Ubiquitination is required for centrosomal targeting. Deubiquitinated by USP35 or USP38; leading to stabilization. In terms of processing, in vitro phosphorylation at Thr-117 by AURKB prevents interaction with INCENP and localization to mitotic chromosomes. Phosphorylation at Thr-48 by CK2 is critical for its mitotic and anti-apoptotic activities. Phosphorylation at Thr-34 by CDK15 is critical for its anti-apoptotic activity.

The protein resides in the cytoplasm. The protein localises to the nucleus. It is found in the chromosome. It localises to the centromere. Its subcellular location is the cytoskeleton. The protein resides in the spindle. The protein localises to the kinetochore. It is found in the midbody. Multitasking protein that has dual roles in promoting cell proliferation and preventing apoptosis. Component of a chromosome passage protein complex (CPC) which is essential for chromosome alignment and segregation during mitosis and cytokinesis. Acts as an important regulator of the localization of this complex; directs CPC movement to different locations from the inner centromere during prometaphase to midbody during cytokinesis and participates in the organization of the center spindle by associating with polymerized microtubules. Involved in the recruitment of CPC to centromeres during early mitosis via association with histone H3 phosphorylated at 'Thr-3' (H3pT3) during mitosis. The complex with RAN plays a role in mitotic spindle formation by serving as a physical scaffold to help deliver the RAN effector molecule TPX2 to microtubules. May counteract a default induction of apoptosis in G2/M phase. The acetylated form represses STAT3 transactivation of target gene promoters. May play a role in neoplasia. Inhibitor of CASP3 and CASP7. Essential for the maintenance of mitochondrial integrity and function. This is Baculoviral IAP repeat-containing protein 5 (Birc5) from Rattus norvegicus (Rat).